A 287-amino-acid polypeptide reads, in one-letter code: ATP synthase gamma chain (287 aa).

The protein belongs to the ATPase gamma chain family. In terms of assembly, F-type ATPases have 2 components, CF(1) - the catalytic core - and CF(0) - the membrane proton channel. CF(1) has five subunits: alpha(3), beta(3), gamma(1), delta(1), epsilon(1). CF(0) has three main subunits: a, b and c.

It is found in the cell inner membrane. In terms of biological role, produces ATP from ADP in the presence of a proton gradient across the membrane. The gamma chain is believed to be important in regulating ATPase activity and the flow of protons through the CF(0) complex. This Parabacteroides distasonis (strain ATCC 8503 / DSM 20701 / CIP 104284 / JCM 5825 / NCTC 11152) protein is ATP synthase gamma chain.